The primary structure comprises 577 residues: DNA-directed RNA polymerase subunit alpha (577 aa).

The segment at 1–461 (MIKIIIKETF…QLFLPLQQIR (461 aa)) is alpha N-terminal domain (alpha-NTD). An alpha C-terminal domain (alpha-CTD) region spans residues 510–577 (FDHRLLELDI…ALQLMKLTLK (68 aa)).

The protein belongs to the RNA polymerase alpha chain family. In plastids the minimal PEP RNA polymerase catalytic core is composed of four subunits: alpha, beta, beta', and beta''. When a (nuclear-encoded) sigma factor is associated with the core the holoenzyme is formed, which can initiate transcription.

Its subcellular location is the plastid. It is found in the chloroplast. It carries out the reaction RNA(n) + a ribonucleoside 5'-triphosphate = RNA(n+1) + diphosphate. DNA-dependent RNA polymerase catalyzes the transcription of DNA into RNA using the four ribonucleoside triphosphates as substrates. This Tupiella akineta (Green alga) protein is DNA-directed RNA polymerase subunit alpha.